A 449-amino-acid polypeptide reads, in one-letter code: Bifunctional F420 biosynthesis protein FbiB (449 aa).

Residues 1–245 form a coenzyme F420:L-glutamate ligase region; the sequence is MSPAGEHGTA…PGTEDLFWLG (245 aa). GTP contacts are provided by residues 21–24, serine 51, and lysine 56; that span reads LPEF. A divalent metal cation is bound at residue aspartate 110. Asparagine 113 contacts GTP. Positions 151 and 152 each coordinate a divalent metal cation. The dehydro-coenzyme F420-0 reductase stretch occupies residues 246-449; it reads TAEAIELGRR…ADPGDLLIRK (204 aa). FMN-binding positions include 261-265 and alanine 289; that span reads RRSVR. Aspartate 321 is a binding site for coenzyme F420-(gamma-Glu)n. 2 residues coordinate FMN: glycine 400 and arginine 437.

This sequence in the N-terminal section; belongs to the CofE family. The cofactor is Mg(2+). Requires Mn(2+) as cofactor. K(+) serves as cofactor.

The catalysed reaction is oxidized coenzyme F420-0 + GTP + L-glutamate = oxidized coenzyme F420-1 + GDP + phosphate + H(+). It catalyses the reaction oxidized coenzyme F420-1 + GTP + L-glutamate = oxidized coenzyme F420-2 + GDP + phosphate + H(+). It carries out the reaction oxidized coenzyme F420-(gamma-L-Glu)(n) + GTP + L-glutamate = oxidized coenzyme F420-(gamma-L-Glu)(n+1) + GDP + phosphate + H(+). The enzyme catalyses oxidized coenzyme F420-0 + FMN + H(+) = dehydro coenzyme F420-0 + FMNH2. Its pathway is cofactor biosynthesis; coenzyme F420 biosynthesis. Bifunctional enzyme that catalyzes the GTP-dependent successive addition of multiple gamma-linked L-glutamates to the L-lactyl phosphodiester of 7,8-didemethyl-8-hydroxy-5-deazariboflavin (F420-0) to form polyglutamated F420 derivatives, and the FMNH2-dependent reduction of dehydro-F420-0 to form F420-0. This chain is Bifunctional F420 biosynthesis protein FbiB, found in Mycobacterium avium (strain 104).